The primary structure comprises 201 residues: Recombination protein RecR (201 aa).

The C4-type zinc finger occupies 57-72 (CADCRTFTEQEVCNIC). In terms of domain architecture, Toprim spans 81–176 (GQICVVESPA…EASRIAHGVP (96 aa)).

This sequence belongs to the RecR family.

In terms of biological role, may play a role in DNA repair. It seems to be involved in an RecBC-independent recombinational process of DNA repair. It may act with RecF and RecO. The chain is Recombination protein RecR from Shigella boydii serotype 18 (strain CDC 3083-94 / BS512).